The following is a 159-amino-acid chain: SsrA-binding protein (159 aa).

Belongs to the SmpB family.

It is found in the cytoplasm. Required for rescue of stalled ribosomes mediated by trans-translation. Binds to transfer-messenger RNA (tmRNA), required for stable association of tmRNA with ribosomes. tmRNA and SmpB together mimic tRNA shape, replacing the anticodon stem-loop with SmpB. tmRNA is encoded by the ssrA gene; the 2 termini fold to resemble tRNA(Ala) and it encodes a 'tag peptide', a short internal open reading frame. During trans-translation Ala-aminoacylated tmRNA acts like a tRNA, entering the A-site of stalled ribosomes, displacing the stalled mRNA. The ribosome then switches to translate the ORF on the tmRNA; the nascent peptide is terminated with the 'tag peptide' encoded by the tmRNA and targeted for degradation. The ribosome is freed to recommence translation, which seems to be the essential function of trans-translation. The chain is SsrA-binding protein from Acidiphilium cryptum (strain JF-5).